Reading from the N-terminus, the 307-residue chain is Leucine-rich repeat-containing protein 59 (307 aa).

Residue M1 is modified to N-acetylmethionine. An N-acetylthreonine; in Leucine-rich repeat-containing protein 59, N-terminally processed modification is found at T2. At 2–244 (TKAGSKGGNL…KPPPRKHTRS (243 aa)) the chain is on the cytoplasmic side. LRR repeat units follow at residues 10–31 (NLRD…NEVP), 40–62 (KATV…CGLT), 63–84 (HLVK…FGRL), 86–107 (NLQH…FAQL), and 109–128 (NLKW…AKVA). Phosphoserine is present on residues S23 and S25. An N6-succinyllysine modification is found at K73. K135 carries the N6-acetyllysine modification. Positions 148-216 (MKAVQADQER…KASKREQEKK (69 aa)) form a coiled coil. Residues 150-241 (AVQADQERER…RPRKPPPRKH (92 aa)) are disordered. The span at 154-221 (DQERERQRRL…EQEKKPKKEA (68 aa)) shows a compositional bias: basic and acidic residues. Over residues 229–241 (SGSRPRKPPPRKH) the composition is skewed to basic residues. The chain crosses the membrane as a helical span at residues 245 to 265 (WAVLKVLLLLLLLCVAGGLVV). Residues 266-307 (CRVTGLHQQPLCTSVNTIYDNAVQGLRHHEILQWVLQTDSQQ) lie on the Lumenal side of the membrane.

As to quaternary structure, can form homodimers. Interacts with SGO1. Interacts with FGF1.

Its subcellular location is the microsome membrane. The protein resides in the endoplasmic reticulum membrane. It localises to the nucleus envelope. Required for nuclear import of FGF1, but not that of FGF2. Might regulate nuclear import of exogenous FGF1 by facilitating interaction with the nuclear import machinery and by transporting cytosolic FGF1 to, and possibly through, the nuclear pores. The chain is Leucine-rich repeat-containing protein 59 (Lrrc59) from Mus musculus (Mouse).